Reading from the N-terminus, the 351-residue chain is UDP-3-O-acylglucosamine N-acyltransferase (351 aa).

The Proton acceptor role is filled by histidine 240.

It belongs to the transferase hexapeptide repeat family. LpxD subfamily. As to quaternary structure, homotrimer.

The catalysed reaction is a UDP-3-O-[(3R)-3-hydroxyacyl]-alpha-D-glucosamine + a (3R)-hydroxyacyl-[ACP] = a UDP-2-N,3-O-bis[(3R)-3-hydroxyacyl]-alpha-D-glucosamine + holo-[ACP] + H(+). It functions in the pathway bacterial outer membrane biogenesis; LPS lipid A biosynthesis. Functionally, catalyzes the N-acylation of UDP-3-O-acylglucosamine using 3-hydroxyacyl-ACP as the acyl donor. Is involved in the biosynthesis of lipid A, a phosphorylated glycolipid that anchors the lipopolysaccharide to the outer membrane of the cell. The protein is UDP-3-O-acylglucosamine N-acyltransferase of Methylacidiphilum infernorum (isolate V4) (Methylokorus infernorum (strain V4)).